We begin with the raw amino-acid sequence, 172 residues long: UPF0102 protein Pcryo_2198 (172 aa).

This sequence belongs to the UPF0102 family.

In Psychrobacter cryohalolentis (strain ATCC BAA-1226 / DSM 17306 / VKM B-2378 / K5), this protein is UPF0102 protein Pcryo_2198.